Reading from the N-terminus, the 142-residue chain is Nucleoside diphosphate kinase (142 aa).

Residues lysine 11, phenylalanine 59, arginine 87, threonine 93, arginine 104, and asparagine 114 each coordinate ATP. Residue histidine 117 is the Pros-phosphohistidine intermediate of the active site.

Belongs to the NDK family. In terms of assembly, homotetramer. The cofactor is Mg(2+).

The protein localises to the cytoplasm. The catalysed reaction is a 2'-deoxyribonucleoside 5'-diphosphate + ATP = a 2'-deoxyribonucleoside 5'-triphosphate + ADP. It carries out the reaction a ribonucleoside 5'-diphosphate + ATP = a ribonucleoside 5'-triphosphate + ADP. Its function is as follows. Major role in the synthesis of nucleoside triphosphates other than ATP. The ATP gamma phosphate is transferred to the NDP beta phosphate via a ping-pong mechanism, using a phosphorylated active-site intermediate. The chain is Nucleoside diphosphate kinase from Salinibacter ruber (strain DSM 13855 / M31).